The following is a 1671-amino-acid chain: DNA polymerase (1671 aa).

The segment at 135-326 is 3'-5' exonuclease; sequence LKMLAFDIET…KVTYELGKEF (192 aa). Residues 524–665 enclose the DOD-type homing endonuclease 1 domain; sequence LAGILLAEGT…VSKLLSQLGI (142 aa). An intrachain disulfide couples C788 to C802. Residues 1132 to 1265 enclose the DOD-type homing endonuclease 2 domain; that stretch reads LLGYYVSEGY…LVLLLNSVGV (134 aa). C1403 and C1406 are joined by a disulfide.

It belongs to the DNA polymerase type-B family. In terms of processing, undergoes a protein self splicing that involves a post-translational excision of the intervening region (intein) followed by peptide ligation.

It carries out the reaction DNA(n) + a 2'-deoxyribonucleoside 5'-triphosphate = DNA(n+1) + diphosphate. Its function is as follows. Has high processivity, a high polymerization rate and high fidelity. In addition to polymerase activity, also exhibits 3' to 5' exonuclease activity. In terms of biological role, intein encoded endonucleases are thought to mediate intein mobility by site-specific recombination initiated by endonuclease cleavage at the 'homing site' in genes that lack the intein. Upon expression in E.coli PI-PkoI recognizes the minimal sequence 5'-GATTTTAGATCCCTGTACC-3' and cuts after T-10. PI-PkoII recognizes the minimal sequence 5'-CAGCTACTACGGTTAC-3' and cuts after C-10. Given the high intracellular K(+) content (&gt;0.5 M), PI-PkoII is probably more active than PI-PkoI in vivo. This chain is DNA polymerase (pol), found in Thermococcus kodakarensis (strain ATCC BAA-918 / JCM 12380 / KOD1) (Pyrococcus kodakaraensis (strain KOD1)).